The primary structure comprises 175 residues: Gamma-crystallin M1 (175 aa).

Beta/gamma crystallin 'Greek key' domains are found at residues 2–40, 41–86, 89–121, and 130–172; these read GKIIFYEDRNFQGRSYECMSDCSDITTYMSRCQSCRVES, GCFM…RYPY, FRMRIYEREYFGGQMSELMGDCDSIMDRFRMSD, and GHWL…RRIT.

The protein belongs to the beta/gamma-crystallin family. As to quaternary structure, monomer.

Its function is as follows. Crystallins are the dominant structural components of the vertebrate eye lens. This chain is Gamma-crystallin M1 (GM1), found in Chiloscyllium indicum (Slender bamboo shark).